A 473-amino-acid polypeptide reads, in one-letter code: Bestrophin-4 (473 aa).

Residues 1-31 (MTVSYTLKVAEARFGGFSGLLLRWRGSIYKL) are Cytoplasmic-facing. A10 provides a ligand contact to Ca(2+). The chain crosses the membrane as a helical span at residues 32–51 (LYKEFLLFGALYAVLSITYR). The Extracellular segment spans residues 52–60 (LLLTQEQRY). Residues 61–82 (VYAQVARYCNRSADLIPLSFVL) traverse the membrane as a helical segment. Topologically, residues 83 to 237 (GFYVTLVVNR…DWISIPLVYT (155 aa)) are cytoplasmic. Residues 238 to 255 (QVVTIAVYSFFALSLVGR) traverse the membrane as a helical segment. Over 256-289 (QFVEPEAGAAKPQKLLKPGQEPAPALGDPDMYVP) the chain is Extracellular. A helical membrane pass occupies residues 290 to 303 (LTTLLQFFFYAGWL). Residues 304–473 (KVAEQIINPF…AESGDEALEP (170 aa)) are Cytoplasmic-facing. Ca(2+)-binding residues include Q308, N311, D316, and D319. Disordered regions lie at residues 379–408 (TFNL…PAAQ) and 428–473 (RNFG…ALEP). Residues 396 to 407 (ASPGSGRPAPAA) show a composition bias toward low complexity. Residues 445–461 (FRAEEGGDPEAAARIEE) show a composition bias toward basic and acidic residues. The segment covering 462–473 (ESAESGDEALEP) has biased composition (acidic residues).

This sequence belongs to the anion channel-forming bestrophin (TC 1.A.46) family. Calcium-sensitive chloride channel subfamily. As to expression, predominantly found in colon and the weakly in fetal brain, spinal cord, retina, lung, trachea, testis and placenta.

The protein resides in the cell membrane. The catalysed reaction is chloride(in) = chloride(out). It catalyses the reaction hydrogencarbonate(in) = hydrogencarbonate(out). Its function is as follows. Ligand-gated anion channel that allows the movement of anions across cell membranes when activated by Calcium (Ca2+). Mediates the movement of hydrogencarbonate and chloride. The sequence is that of Bestrophin-4 from Homo sapiens (Human).